The sequence spans 500 residues: Pyruvate kinase 1 (500 aa).

S2 is subject to N-acetylserine. Phosphoserine occurs at positions 9 and 16. T31 carries the post-translational modification Phosphothreonine. A substrate-binding site is contributed by R49. Positions 51 and 53 each coordinate K(+). 51–54 serves as a coordination point for ATP; the sequence is NFSH. S70 carries the phosphoserine modification. The K(+) site is built by D84 and T85. R91 provides a ligand contact to ATP. Glycyl lysine isopeptide (Lys-Gly) (interchain with G-Cter in URM1) cross-links involve residues K119, K124, K161, K164, and K166. K177 lines the ATP pocket. T184 is subject to Phosphothreonine. A Glycyl lysine isopeptide (Lys-Gly) (interchain with G-Cter in ubiquitin) cross-link involves residue K204. The residue at position 213 (S213) is a Phosphoserine. K240 provides a ligand contact to substrate. E242 provides a ligand contact to Mn(2+). A Glycyl lysine isopeptide (Lys-Gly) (interchain with G-Cter in ubiquitin) cross-link involves residue K255. Residues G265 and D266 each coordinate substrate. D266 is a Mn(2+) binding site. A Glycyl lysine isopeptide (Lys-Gly) (interchain with G-Cter in URM1) cross-link involves residue K292. T298 is a binding site for substrate. A Phosphoserine modification is found at S316. A Glycyl lysine isopeptide (Lys-Gly) (interchain with G-Cter in URM1) cross-link involves residue K394. A beta-D-fructose 1,6-bisphosphate-binding site is contributed by 402-407; the sequence is STSGTT. At C418 the chain carries Cysteine persulfide. Residue K446 forms a Glycyl lysine isopeptide (Lys-Gly) (interchain with G-Cter in ubiquitin); alternate linkage. Residue K446 forms a Glycyl lysine isopeptide (Lys-Gly) (interchain with G-Cter in URM1); alternate linkage. Position 450 is a phosphoserine (S450). Beta-D-fructose 1,6-bisphosphate contacts are provided by W452 and R459. T478 carries the phosphothreonine modification. Residue G484 participates in beta-D-fructose 1,6-bisphosphate binding.

The protein belongs to the pyruvate kinase family. In terms of assembly, homotetramer. Requires Mg(2+) as cofactor. The cofactor is K(+). Conjugated to URM1, a ubiquitin-like protein, in response to oxidative stresses. The attachment of URM1 to lysine residues exclusively depends on the presence of a peroxidatic cysteine in the target protein, with low specificity for the particular residue, motif, or structural context at which urmylation can occur. The URM1-conjugation reaction is mechanistically and directly coupled to the process of cysteine persulfidation, transfering the sulfur atom of the URM1 thiocarboxyl group to redox-active cysteine residues in the target protein if it is exposed to oxidative conditions. In terms of processing, persulfidated on specific redox-active cysteine residues. Persulfidation (also called protein S-sulfhydration) may provide a molecular mechanism that enables cells to protect vulnerable cysteine residues from reactive oxygen species (ROS) under stress conditions.

It catalyses the reaction pyruvate + ATP = phosphoenolpyruvate + ADP + H(+). It functions in the pathway carbohydrate degradation; glycolysis; pyruvate from D-glyceraldehyde 3-phosphate: step 5/5. With respect to regulation, the activity is regulated by glucose levels. Activated by fructose-1,6-bisphosphate. The sequence is that of Pyruvate kinase 1 (CDC19) from Saccharomyces cerevisiae (strain ATCC 204508 / S288c) (Baker's yeast).